The following is a 339-amino-acid chain: Glycerol-3-phosphate dehydrogenase [NAD(P)+] (339 aa).

The NADPH site is built by Ser-14, Tyr-15, His-35, and Lys-109. Sn-glycerol 3-phosphate is bound by residues Lys-109, Gly-138, and Thr-140. Ala-142 serves as a coordination point for NADPH. Residues Lys-194, Asp-247, Ser-257, Arg-258, and Asn-259 each coordinate sn-glycerol 3-phosphate. Lys-194 acts as the Proton acceptor in catalysis. Arg-258 provides a ligand contact to NADPH. Positions 282 and 284 each coordinate NADPH.

It belongs to the NAD-dependent glycerol-3-phosphate dehydrogenase family.

The protein resides in the cytoplasm. It carries out the reaction sn-glycerol 3-phosphate + NAD(+) = dihydroxyacetone phosphate + NADH + H(+). The enzyme catalyses sn-glycerol 3-phosphate + NADP(+) = dihydroxyacetone phosphate + NADPH + H(+). Its pathway is membrane lipid metabolism; glycerophospholipid metabolism. Its function is as follows. Catalyzes the reduction of the glycolytic intermediate dihydroxyacetone phosphate (DHAP) to sn-glycerol 3-phosphate (G3P), the key precursor for phospholipid synthesis. The polypeptide is Glycerol-3-phosphate dehydrogenase [NAD(P)+] (Shewanella pealeana (strain ATCC 700345 / ANG-SQ1)).